Here is a 178-residue protein sequence, read N- to C-terminus: Large ribosomal subunit protein uL10 (178 aa).

This sequence belongs to the universal ribosomal protein uL10 family. As to quaternary structure, part of the ribosomal stalk of the 50S ribosomal subunit. The N-terminus interacts with L11 and the large rRNA to form the base of the stalk. The C-terminus forms an elongated spine to which L12 dimers bind in a sequential fashion forming a multimeric L10(L12)X complex.

Functionally, forms part of the ribosomal stalk, playing a central role in the interaction of the ribosome with GTP-bound translation factors. The chain is Large ribosomal subunit protein uL10 from Dictyoglomus turgidum (strain DSM 6724 / Z-1310).